Reading from the N-terminus, the 542-residue chain is 2,3-bisphosphoglycerate-independent phosphoglycerate mutase (542 aa).

Residues aspartate 13 and serine 63 each coordinate Mn(2+). The Phosphoserine intermediate role is filled by serine 63. Substrate is bound by residues histidine 124, 154–155 (RD), arginine 186, arginine 192, 263–266 (RADR), and lysine 357. Residues aspartate 424, histidine 428, aspartate 465, histidine 466, and histidine 484 each coordinate Mn(2+).

It belongs to the BPG-independent phosphoglycerate mutase family. Monomer. It depends on Mn(2+) as a cofactor.

It carries out the reaction (2R)-2-phosphoglycerate = (2R)-3-phosphoglycerate. It participates in carbohydrate degradation; glycolysis; pyruvate from D-glyceraldehyde 3-phosphate: step 3/5. Functionally, catalyzes the interconversion of 2-phosphoglycerate and 3-phosphoglycerate. The polypeptide is 2,3-bisphosphoglycerate-independent phosphoglycerate mutase (Herpetosiphon aurantiacus (strain ATCC 23779 / DSM 785 / 114-95)).